A 393-amino-acid chain; its full sequence is Bifunctional enzyme IspD/IspF (393 aa).

Residues 1 to 234 (MTTSQRTAAI…ARLAASLGDI (234 aa)) are 2-C-methyl-D-erythritol 4-phosphate cytidylyltransferase. Positions 235–393 (RTGTGYDVHA…SATIRLPWGA (159 aa)) are 2-C-methyl-D-erythritol 2,4-cyclodiphosphate synthase. Residues aspartate 241 and histidine 243 each coordinate a divalent metal cation. Residues 241–243 (DVH) and 267–268 (HS) each bind 4-CDP-2-C-methyl-D-erythritol 2-phosphate. Histidine 275 provides a ligand contact to a divalent metal cation. 4-CDP-2-C-methyl-D-erythritol 2-phosphate is bound by residues 289-291 (DIG), 365-368 (TTSE), phenylalanine 372, and arginine 375.

The protein in the N-terminal section; belongs to the IspD/TarI cytidylyltransferase family. IspD subfamily. This sequence in the C-terminal section; belongs to the IspF family. Requires a divalent metal cation as cofactor.

It carries out the reaction 2-C-methyl-D-erythritol 4-phosphate + CTP + H(+) = 4-CDP-2-C-methyl-D-erythritol + diphosphate. The enzyme catalyses 4-CDP-2-C-methyl-D-erythritol 2-phosphate = 2-C-methyl-D-erythritol 2,4-cyclic diphosphate + CMP. Its pathway is isoprenoid biosynthesis; isopentenyl diphosphate biosynthesis via DXP pathway; isopentenyl diphosphate from 1-deoxy-D-xylulose 5-phosphate: step 2/6. It participates in isoprenoid biosynthesis; isopentenyl diphosphate biosynthesis via DXP pathway; isopentenyl diphosphate from 1-deoxy-D-xylulose 5-phosphate: step 4/6. In terms of biological role, bifunctional enzyme that catalyzes the formation of 4-diphosphocytidyl-2-C-methyl-D-erythritol from CTP and 2-C-methyl-D-erythritol 4-phosphate (MEP) (IspD), and catalyzes the conversion of 4-diphosphocytidyl-2-C-methyl-D-erythritol 2-phosphate (CDP-ME2P) to 2-C-methyl-D-erythritol 2,4-cyclodiphosphate (ME-CPP) with a corresponding release of cytidine 5-monophosphate (CMP) (IspF). This chain is Bifunctional enzyme IspD/IspF, found in Bradyrhizobium sp. (strain ORS 278).